We begin with the raw amino-acid sequence, 352 residues long: UPF0324 membrane protein RA0957 (352 aa).

10 helical membrane-spanning segments follow: residues 24-43 (VVSY…SAQF), 48-67 (YGAP…NFLS), 104-126 (LGVS…AIIV), 136-158 (LSLL…LNAV), 169-191 (LALT…PVLA), 201-223 (SGVF…FAMS), 235-257 (IVRV…VLGA), 272-294 (GFVL…AAAG), 301-318 (SRWL…KTSV), and 328-350 (HVTL…LLWY).

Belongs to the UPF0324 family.

It is found in the cell membrane. The polypeptide is UPF0324 membrane protein RA0957 (Rhizobium meliloti (strain 1021) (Ensifer meliloti)).